We begin with the raw amino-acid sequence, 515 residues long: Cell division control protein 6 homolog (515 aa).

Over residues 1-24 the composition is skewed to low complexity; that stretch reads MPTLRSATASASTAGTASPTAIAT. The interval 1-70 is disordered; it reads MPTLRSATAS…TPKLLSASPR (70 aa). Residues 43–52 are compositionally biased toward polar residues; that stretch reads DASQFTSPHK.

It belongs to the CDC6/cdc18 family.

It is found in the nucleus. Its function is as follows. May be involved in the initiation of DNA replication. The sequence is that of Cell division control protein 6 homolog from Oryza sativa subsp. japonica (Rice).